Here is a 331-residue protein sequence, read N- to C-terminus: Phosphate acyltransferase (331 aa).

The protein belongs to the PlsX family. In terms of assembly, homodimer. Probably interacts with PlsY.

Its subcellular location is the cytoplasm. It carries out the reaction a fatty acyl-[ACP] + phosphate = an acyl phosphate + holo-[ACP]. It functions in the pathway lipid metabolism; phospholipid metabolism. Catalyzes the reversible formation of acyl-phosphate (acyl-PO(4)) from acyl-[acyl-carrier-protein] (acyl-ACP). This enzyme utilizes acyl-ACP as fatty acyl donor, but not acyl-CoA. The polypeptide is Phosphate acyltransferase (Ureaplasma urealyticum serovar 10 (strain ATCC 33699 / Western)).